The following is a 262-amino-acid chain: Indole-3-glycerol phosphate synthase (262 aa).

Belongs to the TrpC family.

It carries out the reaction 1-(2-carboxyphenylamino)-1-deoxy-D-ribulose 5-phosphate + H(+) = (1S,2R)-1-C-(indol-3-yl)glycerol 3-phosphate + CO2 + H2O. The protein operates within amino-acid biosynthesis; L-tryptophan biosynthesis; L-tryptophan from chorismate: step 4/5. The sequence is that of Indole-3-glycerol phosphate synthase from Dechloromonas aromatica (strain RCB).